The chain runs to 282 residues: Nucleotide-binding protein XAC2976 (282 aa).

5–12 (GLSGSGKS) serves as a coordination point for ATP. 57 to 60 (DVRS) serves as a coordination point for GTP.

It belongs to the RapZ-like family.

Displays ATPase and GTPase activities. The chain is Nucleotide-binding protein XAC2976 from Xanthomonas axonopodis pv. citri (strain 306).